Reading from the N-terminus, the 874-residue chain is Eukaryotic translation initiation factor 3 subunit C (874 aa).

The tract at residues 1–70 (MSRFFVSGYT…DGRPSGPAYF (70 aa)) is disordered. Residues 14-61 (SSEEEDLLSTSEEELLSSSDEGEDNESDSSFFGEDDDESEESSSDDED) are compositionally biased toward acidic residues. A PCI domain is found at 598-774 (FHQHINLELL…KFISFTSTTE (177 aa)). The tract at residues 797–874 (KNEKTQSNGY…SNNDEFQATA (78 aa)) is disordered. A compositionally biased stretch (low complexity) spans 813 to 848 (KDQQNQQQQNQNQNQQQQQNQQQQQQQQSSQQQSNN). Residues 862 to 874 (NVNSNNDEFQATA) show a composition bias toward polar residues.

Belongs to the eIF-3 subunit C family. Component of the eukaryotic translation initiation factor 3 (eIF-3) complex.

It is found in the cytoplasm. In terms of biological role, component of the eukaryotic translation initiation factor 3 (eIF-3) complex, which is involved in protein synthesis of a specialized repertoire of mRNAs and, together with other initiation factors, stimulates binding of mRNA and methionyl-tRNAi to the 40S ribosome. The eIF-3 complex specifically targets and initiates translation of a subset of mRNAs involved in cell proliferation. This Candida albicans (strain SC5314 / ATCC MYA-2876) (Yeast) protein is Eukaryotic translation initiation factor 3 subunit C.